A 242-amino-acid chain; its full sequence is Uridylate kinase (242 aa).

17 to 20 (KLSG) provides a ligand contact to ATP. Glycine 59 is a UMP binding site. Residues glycine 60 and arginine 64 each contribute to the ATP site. UMP-binding positions include aspartate 79 and 140-147 (TGNPFFTT). Residues threonine 167, tyrosine 173, and aspartate 176 each coordinate ATP.

This sequence belongs to the UMP kinase family. In terms of assembly, homohexamer.

It is found in the cytoplasm. The catalysed reaction is UMP + ATP = UDP + ADP. It functions in the pathway pyrimidine metabolism; CTP biosynthesis via de novo pathway; UDP from UMP (UMPK route): step 1/1. With respect to regulation, inhibited by UTP. Functionally, catalyzes the reversible phosphorylation of UMP to UDP. In Marinobacter nauticus (strain ATCC 700491 / DSM 11845 / VT8) (Marinobacter aquaeolei), this protein is Uridylate kinase.